The chain runs to 423 residues: Probable efflux pump mfs2 (423 aa).

Transmembrane regions (helical) follow at residues 21 to 41 (TMAL…IGPV), 49 to 69 (SIFH…GFAH), 79 to 99 (LLAG…LGDV), 111 to 131 (LYLL…GFIV), 138 to 158 (WMFW…LLFH), 220 to 240 (AILE…FSAL), 256 to 278 (YIVI…DYAY), 295 to 315 (IPLL…YGWA), 319 to 339 (HLIW…MQIF), 360 to 380 (AATQ…SNSL), and 392 to 411 (LLAF…LWRW).

Belongs to the major facilitator superfamily.

The protein resides in the membrane. Its function is as follows. Probable efflux pump; part of the gene cluster 27 that mediates the biosynthesis of asparasone A, a sclerotium-specific anthraquinone pigment important for sclerotial survival. The polypeptide is Probable efflux pump mfs2 (Aspergillus flavus (strain ATCC 200026 / FGSC A1120 / IAM 13836 / NRRL 3357 / JCM 12722 / SRRC 167)).